A 1308-amino-acid polypeptide reads, in one-letter code: Chromosome partition protein Smc (1308 aa).

34-41 (PNGCGKSN) contributes to the ATP binding site. The interval 115 to 181 (AAREASMEEV…VAEGQPSDAQ (67 aa)) is disordered. Positions 137-169 (TEAEATEQQAAPSEGAAPTTEATAPSTENEAAP) are enriched in low complexity. Positions 278–600 (ITKYKTKKRL…DTLRAEYATL (323 aa)) form a coiled coil. In terms of domain architecture, SMC hinge spans 637–757 (AGVLADFLEV…VPDPAIGREL (121 aa)). 2 coiled-coil regions span residues 791–1046 (SLKR…ELHA) and 1110–1148 (MALE…EIDQ).

Belongs to the SMC family. In terms of assembly, homodimer.

Its subcellular location is the cytoplasm. In terms of biological role, required for chromosome condensation and partitioning. The polypeptide is Chromosome partition protein Smc (Koribacter versatilis (strain Ellin345)).